Consider the following 891-residue polypeptide: von Willebrand factor A domain-containing protein 7 (891 aa).

Residues methionine 1–alanine 28 form the signal peptide. N-linked (GlcNAc...) asparagine glycosylation is present at asparagine 55. Residues proline 237 to proline 272 are disordered. Residues alanine 313–leucine 506 enclose the VWFA domain.

As to expression, expressed at low level in different cell lines.

Its subcellular location is the secreted. This is von Willebrand factor A domain-containing protein 7 (VWA7) from Homo sapiens (Human).